Here is a 210-residue protein sequence, read N- to C-terminus: T-cell surface glycoprotein CD8 beta chain (210 aa).

The signal sequence occupies residues 1–21; the sequence is MRPRLWLLLAAQLTVLHGNSV. Residues 22–132 enclose the Ig-like V-type domain; the sequence is LQQTPAYIKV…ELTFGKGTQL (111 aa). At 22-170 the chain is on the extracellular side; the sequence is LQQTPAYIKV…ETQKGPLCSP (149 aa). Cysteine 41 and cysteine 116 are oxidised to a cystine. N-linked (GlcNAc...) asparagine glycosylation is present at asparagine 102. A helical transmembrane segment spans residues 171 to 191; the sequence is ITLGLLVAGVLVLLVSLGVAI. Topologically, residues 192–210 are cytoplasmic; that stretch reads HLCCRRRRARLRFMKQFYK. At tyrosine 209 the chain carries Phosphotyrosine.

In terms of assembly, forms disulfide-linked heterodimers with CD8A at the cell surface. Interacts with CD3D; this interaction couples TCR-CD3 with CD8. Interacts with LCK. Phosphorylated as a consequence of T-cell activation. Post-translationally, palmitoylated at the cytoplasmic tail and thereby targets the heterodimer CD8A/CD8B to lipid rafts unlike CD8A homodimers. In terms of tissue distribution, isoform 1, isoform 3, isoform 5, isoform 6, isoform 7 and isoform 8 are expressed in both thymus and peripheral CD8+ T-cells. Expression of isoform 1 is higher in thymus CD8+ T-cells than in peripheral CD8+ T-cells. Expression of isoform 6 is higher in peripheral CD8+ T-cells than in thymus CD8+ T-cells.

The protein resides in the cell membrane. It is found in the secreted. Integral membrane glycoprotein that plays an essential role in the immune response and serves multiple functions in responses against both external and internal offenses. In T-cells, functions primarily as a coreceptor for MHC class I molecule:peptide complex. The antigens presented by class I peptides are derived from cytosolic proteins while class II derived from extracellular proteins. Interacts simultaneously with the T-cell receptor (TCR) and the MHC class I proteins presented by antigen presenting cells (APCs). In turn, recruits the Src kinase LCK to the vicinity of the TCR-CD3 complex. A palmitoylation site in the cytoplasmic tail of CD8B chain contributes to partitioning of CD8 into the plasma membrane lipid rafts where signaling proteins are enriched. Once LCK recruited, it initiates different intracellular signaling pathways by phosphorylating various substrates ultimately leading to lymphokine production, motility, adhesion and activation of cytotoxic T-lymphocytes (CTLs). Additionally, plays a critical role in thymic selection of CD8+ T-cells. In Homo sapiens (Human), this protein is T-cell surface glycoprotein CD8 beta chain (CD8B).